We begin with the raw amino-acid sequence, 115 residues long: UPF0102 protein Swol_1475 (115 aa).

This sequence belongs to the UPF0102 family.

The polypeptide is UPF0102 protein Swol_1475 (Syntrophomonas wolfei subsp. wolfei (strain DSM 2245B / Goettingen)).